We begin with the raw amino-acid sequence, 1080 residues long: MPKRTDLETILIIGAGPIVIGQACEFDYSGAQACKALRDEGYRVVLVNSNPATIMTDPNMADAVYIEPINWQTVEKIIAKEKPDALLPTMGGQTALNCALDLADHGVLEKYNVELIGAKREAIRMAEDRELFRVAMGEIGLDCPTAAVAHTLEEALEIQTRVGYPTIIRPSFTLGGSGGGIAYNREELIEIVGRGLELSPTTEVLVEESVLGWKEFEMEVVRDTADNCIIVCAIENLDPMGVHTGDSITVAPAQTLTDKEYQRLRDASIAVLRKIGVDTGGSNVQFGISPTTGRVVVIEMNPRVSRSSALASKATGFPIAKVAAKLAVGYTLDELKNEITGGLTPASFEPSIDYVVTKIPRFAFEKFPQADARLTTQMKSVGEVMAMGRTFSESLQKALRGLETGKIGLDPTGLDLSSEDDIATLKRELKAPGPERLFYVADAFRAGMTVADVYALSFIDPWFLDQIEEIVSHEQQLADDGMAALDAPRLRMLKRAGFSDARMAQLIGSNEESVRTLRRALKVRPVYKRVDSCAAEFATSTAYLYSTYEDECEALPTDRDKIMILGGGPNRIGQGIEFDYCCVHAALALRDDGFETIMVNCNPETVSTDYDTSDRLYFEPLTLEDVLEIVELEKPKGVIVQYGGQTPLKLARALEANGVPVIGTSPDSIDLAEDRERFQQLVDKLGLKQPPNRIARNAEEALVLAREIGYPLVVRPSYVLGGRAMEIVYGESDLARYVRDAVKVSNDSPVLLDRFLDNAVEVDVDIIADKDGNVLIGGVMEHIEEAGVHSGDSSCSLPPYSLSPQTQAELRRQVVMLAEGLNVVGLMNTQFAVQVNEAGDDIVYLLEVNPRASRTVPFVSKAIGMPLAKIAARCMAGKTLAEQGATKEIVPDYYSVKEAIFPFAKFQGVDPILGPEMRSTGEVMGVGRSFSAAFARAQEAGGIKAPPLGKAFVSVRDPDKQRVLPVAQALVERGFTLVATRGTGAWLQQNGLSCEIVNKVAEGRPHIVDSIKNGEIVYIVNTTEGRAAISDSFSIRREALQHRVTYSTTVAGAKALVQSLEFRGTGPVWSLQELHKELEA.

The segment at 1–403 (MPKRTDLETI…SLQKALRGLE (403 aa)) is carboxyphosphate synthetic domain. Positions 129, 169, 175, 176, 208, 210, 215, 241, 242, 243, 285, and 299 each coordinate ATP. Residues 133–328 (RVAMGEIGLD…IAKVAAKLAV (196 aa)) enclose the ATP-grasp 1 domain. Residues Q285, E299, and N301 each contribute to the Mg(2+) site. Mn(2+) is bound by residues Q285, E299, and N301. The oligomerization domain stretch occupies residues 404 to 554 (TGKIGLDPTG…YSTYEDECEA (151 aa)). Residues 555–942 (LPTDRDKIMI…AFARAQEAGG (388 aa)) are carbamoyl phosphate synthetic domain. The 198-residue stretch at 679–876 (QQLVDKLGLK…LAKIAARCMA (198 aa)) folds into the ATP-grasp 2 domain. ATP is bound by residues R715, R754, L756, E761, G787, V788, H789, S790, Q830, and E847. Residues Q830, E847, and N849 each coordinate Mg(2+). The Mn(2+) site is built by Q830, E847, and N849. Residues 943–1080 (IKAPPLGKAF…LQELHKELEA (138 aa)) form the MGS-like domain. Positions 943–1080 (IKAPPLGKAF…LQELHKELEA (138 aa)) are allosteric domain.

Belongs to the CarB family. In terms of assembly, composed of two chains; the small (or glutamine) chain promotes the hydrolysis of glutamine to ammonia, which is used by the large (or ammonia) chain to synthesize carbamoyl phosphate. Tetramer of heterodimers (alpha,beta)4. Mg(2+) is required as a cofactor. The cofactor is Mn(2+).

The enzyme catalyses hydrogencarbonate + L-glutamine + 2 ATP + H2O = carbamoyl phosphate + L-glutamate + 2 ADP + phosphate + 2 H(+). It carries out the reaction hydrogencarbonate + NH4(+) + 2 ATP = carbamoyl phosphate + 2 ADP + phosphate + 2 H(+). The protein operates within amino-acid biosynthesis; L-arginine biosynthesis; carbamoyl phosphate from bicarbonate: step 1/1. Its pathway is pyrimidine metabolism; UMP biosynthesis via de novo pathway; (S)-dihydroorotate from bicarbonate: step 1/3. Functionally, large subunit of the glutamine-dependent carbamoyl phosphate synthetase (CPSase). CPSase catalyzes the formation of carbamoyl phosphate from the ammonia moiety of glutamine, carbonate, and phosphate donated by ATP, constituting the first step of 2 biosynthetic pathways, one leading to arginine and/or urea and the other to pyrimidine nucleotides. The large subunit (synthetase) binds the substrates ammonia (free or transferred from glutamine from the small subunit), hydrogencarbonate and ATP and carries out an ATP-coupled ligase reaction, activating hydrogencarbonate by forming carboxy phosphate which reacts with ammonia to form carbamoyl phosphate. The chain is Carbamoyl phosphate synthase large chain from Xanthomonas axonopodis pv. citri (strain 306).